We begin with the raw amino-acid sequence, 83 residues long: RNA-binding protein Hfq (83 aa).

The 61-residue stretch at Asp11 to Ile71 folds into the Sm domain.

Belongs to the Hfq family. As to quaternary structure, homohexamer.

RNA chaperone that binds small regulatory RNA (sRNAs) and mRNAs to facilitate mRNA translational regulation in response to envelope stress, environmental stress and changes in metabolite concentrations. Also binds with high specificity to tRNAs. The protein is RNA-binding protein Hfq of Methylocella silvestris (strain DSM 15510 / CIP 108128 / LMG 27833 / NCIMB 13906 / BL2).